The chain runs to 359 residues: 4'-phosphopantetheinyl transferase A (359 aa).

This sequence belongs to the P-Pant transferase superfamily.

It carries out the reaction apo-[ACP] + CoA = holo-[ACP] + adenosine 3',5'-bisphosphate + H(+). Activity is inhibited bythe antifunfal copmpounds PD 404,182, 6-nitroso-1,2-benzopyrone, and calmidazolium chloride with IC(50) values of 3.9 uM, 35.2 uM, and 19.2 uM, respectively. Its function is as follows. Acyl-carrier-protein synthase that transfers the 4'-phosphopantetheine moiety from coenzyme A to a Ser of an acyl-carrier-protein. The 4'-phosphopantetheine (4'-PPT) portion of CoA provides the essential prosthetic group for a number of carrier proteins and multi-domain enzymes, priming them for the acceptance of acyl building blocks in fatty acid synthesis and many aspects of secondary metabolism mediated by polyketide synthases (PKSs) and non-ribosomal peptide synthetases (NRPSs). PptA is able to transfer the cofactor to a broad range of enzymes with acyl- or peptidyl-carrier protein domains and activates target enzymes involved in the synthesis of lysine, but also secondary metabolites including gliotoxin, fumigaclavine C, fumiquinazole A, fumiquinazoline C, pyripyroprene A, fumagillin, the siderophores triacetylfusarinine C (TAFC) and ferricrocin (FC), and dihydroxy naphthalene (DHN)-melanin. Plays an essential role in virulence. In Aspergillus fumigatus (strain ATCC MYA-4609 / CBS 101355 / FGSC A1100 / Af293) (Neosartorya fumigata), this protein is 4'-phosphopantetheinyl transferase A.